The chain runs to 2153 residues: RNA-directed RNA polymerase L (2153 aa).

5 residues coordinate Mn(2+): His-36, Glu-54, Asp-97, Glu-110, and Val-111. The active-site For endonuclease activity is the Lys-124. In terms of domain architecture, RdRp catalytic spans 957-1143; that stretch reads TGKKIRFKRK…AVNQEMWKSM (187 aa). Residue Asp-1100 coordinates Mg(2+).

It belongs to the Bunyavirales RNA polymerase family. As to quaternary structure, interacts with the viral nucleoprotein. Requires Mn(2+) as cofactor. It depends on Mg(2+) as a cofactor.

Its subcellular location is the host cytoplasm. The protein localises to the host perinuclear region. It carries out the reaction RNA(n) + a ribonucleoside 5'-triphosphate = RNA(n+1) + diphosphate. RNA-dependent RNA polymerase, which is responsible for the replication and transcription of the viral RNA genome using antigenomic RNA as an intermediate. During transcription, synthesizes subgenomic RNAs and assures their capping by a cap-snatching mechanism, which involves the endonuclease activity cleaving the host capped pre-mRNAs. These short capped RNAs are then used as primers for viral transcription. Cleaves ssRNA substrates but not DNA. Seems to downregulate the expression of its own and heterologous mRNAs through its endonuclease activity. This is RNA-directed RNA polymerase L from Black Creek Canal orthohantavirus (BCCV).